Here is a 555-residue protein sequence, read N- to C-terminus: High-affinity gluconate transporter ght3 (555 aa).

Residues 1 to 9 lie on the Cytoplasmic side of the membrane; the sequence is MNRFITSIL. The helical transmembrane segment at 10-30 threads the bilayer; the sequence is VVFISMSGWLQGADTGSISGI. Residues 31-58 lie on the Extracellular side of the membrane; the sequence is LGMRDFQSRFADRYNPISNSYSYSAWRQ. Residues 59–79 traverse the membrane as a helical segment; that stretch reads ALLTGTINAGCLFGAMLSSPF. Residues 80–87 are Cytoplasmic-facing; that stretch reads TERIGKKY. Residues 88 to 108 form a helical membrane-spanning segment; it reads SICFFSGVYIIAELLLVTAVP. Residues 109–112 are Extracellular-facing; sequence SWIQ. The chain crosses the membrane as a helical span at residues 113-133; the sequence is VLVGKILAGVGIGALSVLSPG. The Cytoplasmic segment spans residues 134 to 144; the sequence is YQSEVAPPQIR. A helical membrane pass occupies residues 145 to 165; it reads GAVVATYQIFSTGAALVAACI. Residues 166–179 lie on the Extracellular side of the membrane; that stretch reads NMGTHKLRKTASWR. Residues 180-200 form a helical membrane-spanning segment; sequence TSFGINMLWGILLMVGVLFLP. The Cytoplasmic segment spans residues 201–266; that stretch reads ESPRYLIYKG…IFGKDIRYRT (66 aa). The chain crosses the membrane as a helical span at residues 267–285; sequence CLGFLVMLFRELIGNNYYF. At 286-301 the chain is on the extracellular side; it reads YYATQVFKGTGMTDIF. Residues 302–322 form a helical membrane-spanning segment; the sequence is LPAVILGAINFGTTFGALYTI. The Cytoplasmic portion of the chain corresponds to 323–328; that stretch reads DNLGRR. Residues 329–349 form a helical membrane-spanning segment; that stretch reads NPLIFGAAFQSICFFIYAAVG. Residues 350 to 363 are Extracellular-facing; it reads DRKLIYKNGTSDHR. An N-linked (GlcNAc...) asparagine glycan is attached at N357. A helical transmembrane segment spans residues 364–384; that stretch reads AGSVMIVFSCLFLFSYCCSWG. The Cytoplasmic portion of the chain corresponds to 385-404; the sequence is PMGWVIVGETFPIRYRSKCA. A helical transmembrane segment spans residues 405-425; that stretch reads SVATSGNWLGNFMISFFTPFI. At 426–432 the chain is on the extracellular side; that stretch reads NNAIGFK. Residues 433-453 traverse the membrane as a helical segment; sequence LGYIYACINLFSSFMIFFLAK. Residues 454 to 555 are Cytoplasmic-facing; the sequence is ETKGLTLEEV…FSEDSHPTYI (102 aa). Positions 492–509 are enriched in basic and acidic residues; sequence KEEEKREREKSKGIRGQE. The disordered stretch occupies residues 492–555; sequence KEEEKREREK…FSEDSHPTYI (64 aa). Residues 510–521 are compositionally biased toward acidic residues; that stretch reads EEFIENADEDNN. Over residues 522–534 the composition is skewed to low complexity; that stretch reads DSSSSSGSVVSAV. Over residues 545-555 the composition is skewed to basic and acidic residues; that stretch reads RFSEDSHPTYI.

This sequence belongs to the major facilitator superfamily. Sugar transporter (TC 2.A.1.1) family.

The protein resides in the membrane. Functionally, high-affinity gluconate transporter. The sequence is that of High-affinity gluconate transporter ght3 (ght3) from Schizosaccharomyces pombe (strain 972 / ATCC 24843) (Fission yeast).